The primary structure comprises 662 residues: Glutathione hydrolase 7 (662 aa).

Residues 1–106 are Cytoplasmic-facing; that stretch reads MAAENEASQE…AAECSCRQDG (106 aa). Residues S17, S72, S79, and S83 each carry the phosphoserine modification. The tract at residues 26-90 is disordered; it reads SFPRLPEDEP…DGSPLRETRK (65 aa). The segment covering 72-83 has biased composition (low complexity); the sequence is SSSSEMGSQDGS. The chain crosses the membrane as a helical; Signal-anchor for type II membrane protein span at residues 107–127; sequence LTVIVTACLTFATGVTVALVM. Residues 128 to 662 are Extracellular-facing; that stretch reads QIYFGDPQIF…SPDAAGATIL (535 aa). 10 N-linked (GlcNAc...) asparagine glycosylation sites follow: N198, N267, N283, N330, N353, N394, N452, N519, N523, and N586.

Belongs to the gamma-glutamyltransferase family. As to quaternary structure, interacts with TLCD3A. Heterodimer composed of the light and heavy chains. The active site is located in the light chain. In terms of processing, cleaved by autocatalysis into a large and a small subunit and the autocatalytic cleavage is essential to the functional activation of the enzyme. In terms of tissue distribution, widely expressed, but at low level, except in the airway epithelial cells. Detected in brain, heart, kidney, liver, lung, spleen, testis and trachea.

It localises to the membrane. The enzyme catalyses an N-terminal (5-L-glutamyl)-[peptide] + an alpha-amino acid = 5-L-glutamyl amino acid + an N-terminal L-alpha-aminoacyl-[peptide]. It catalyses the reaction glutathione + H2O = L-cysteinylglycine + L-glutamate. It carries out the reaction an S-substituted glutathione + H2O = an S-substituted L-cysteinylglycine + L-glutamate. It functions in the pathway sulfur metabolism; glutathione metabolism. In terms of biological role, hydrolyzes and transfers gamma-glutamyl moieties from glutathione and other gamma-glutamyl compounds to acceptors. The polypeptide is Glutathione hydrolase 7 (Homo sapiens (Human)).